The chain runs to 268 residues: Imidazole glycerol phosphate synthase subunit HisF (268 aa).

Catalysis depends on residues Asp12 and Asp131.

The protein belongs to the HisA/HisF family. Heterodimer of HisH and HisF.

It is found in the cytoplasm. The catalysed reaction is 5-[(5-phospho-1-deoxy-D-ribulos-1-ylimino)methylamino]-1-(5-phospho-beta-D-ribosyl)imidazole-4-carboxamide + L-glutamine = D-erythro-1-(imidazol-4-yl)glycerol 3-phosphate + 5-amino-1-(5-phospho-beta-D-ribosyl)imidazole-4-carboxamide + L-glutamate + H(+). Its pathway is amino-acid biosynthesis; L-histidine biosynthesis; L-histidine from 5-phospho-alpha-D-ribose 1-diphosphate: step 5/9. Its function is as follows. IGPS catalyzes the conversion of PRFAR and glutamine to IGP, AICAR and glutamate. The HisF subunit catalyzes the cyclization activity that produces IGP and AICAR from PRFAR using the ammonia provided by the HisH subunit. In Methanoregula boonei (strain DSM 21154 / JCM 14090 / 6A8), this protein is Imidazole glycerol phosphate synthase subunit HisF.